We begin with the raw amino-acid sequence, 268 residues long: Tubulin-specific chaperone C (268 aa).

The region spanning 98–255 (PAYTTTLKKH…SAFAFEDFDI (158 aa)) is the C-CAP/cofactor C-like domain.

The protein localises to the cytoplasm. It is found in the cytoskeleton. In terms of biological role, tubulin-folding protein; involved in the early step of the tubulin folding pathway. This chain is Tubulin-specific chaperone C (CIN2), found in Saccharomyces cerevisiae (strain ATCC 204508 / S288c) (Baker's yeast).